The primary structure comprises 273 residues: Transmembrane epididymal protein 1 (273 aa).

Helical transmembrane passes span 34 to 54 (IVTG…GMVL), 72 to 92 (LTMF…KNVL), 96 to 116 (CVGL…LLMV), 129 to 149 (VYSL…AELW), 158 to 178 (LMET…GFIL), and 195 to 215 (IMFV…FLLG).

Belongs to the TMEM45 family.

It is found in the membrane. The polypeptide is Transmembrane epididymal protein 1 (TEDDM1) (Homo sapiens (Human)).